A 223-amino-acid chain; its full sequence is 2-C-methyl-D-erythritol 4-phosphate cytidylyltransferase (223 aa).

It belongs to the IspD/TarI cytidylyltransferase family. IspD subfamily.

The catalysed reaction is 2-C-methyl-D-erythritol 4-phosphate + CTP + H(+) = 4-CDP-2-C-methyl-D-erythritol + diphosphate. It participates in isoprenoid biosynthesis; isopentenyl diphosphate biosynthesis via DXP pathway; isopentenyl diphosphate from 1-deoxy-D-xylulose 5-phosphate: step 2/6. In terms of biological role, catalyzes the formation of 4-diphosphocytidyl-2-C-methyl-D-erythritol from CTP and 2-C-methyl-D-erythritol 4-phosphate (MEP). The polypeptide is 2-C-methyl-D-erythritol 4-phosphate cytidylyltransferase (Prochlorococcus marinus subsp. pastoris (strain CCMP1986 / NIES-2087 / MED4)).